The sequence spans 95 residues: DNA-directed RNA polymerase subunit Rpo6 (95 aa).

The protein belongs to the archaeal Rpo6/eukaryotic RPB6 RNA polymerase subunit family. Part of the RNA polymerase complex.

Its subcellular location is the cytoplasm. The catalysed reaction is RNA(n) + a ribonucleoside 5'-triphosphate = RNA(n+1) + diphosphate. Functionally, DNA-dependent RNA polymerase (RNAP) catalyzes the transcription of DNA into RNA using the four ribonucleoside triphosphates as substrates. The sequence is that of DNA-directed RNA polymerase subunit Rpo6 from Saccharolobus islandicus (strain M.16.27) (Sulfolobus islandicus).